The following is a 169-amino-acid chain: Photosystem I assembly protein Ycf3 (169 aa).

TPR repeat units lie at residues Ala35–Pro68, Ser72–Leu105, and Gly120–Asn153.

The protein belongs to the Ycf3 family.

The protein resides in the plastid. It is found in the chloroplast thylakoid membrane. Essential for the assembly of the photosystem I (PSI) complex. May act as a chaperone-like factor to guide the assembly of the PSI subunits. The protein is Photosystem I assembly protein Ycf3 of Pinus koraiensis (Korean pine).